The chain runs to 433 residues: Glutamate-1-semialdehyde 2,1-aminomutase (433 aa).

At K273 the chain carries N6-(pyridoxal phosphate)lysine.

This sequence belongs to the class-III pyridoxal-phosphate-dependent aminotransferase family. HemL subfamily. In terms of assembly, homodimer. Pyridoxal 5'-phosphate serves as cofactor.

Its subcellular location is the cytoplasm. It catalyses the reaction (S)-4-amino-5-oxopentanoate = 5-aminolevulinate. It functions in the pathway porphyrin-containing compound metabolism; protoporphyrin-IX biosynthesis; 5-aminolevulinate from L-glutamyl-tRNA(Glu): step 2/2. The chain is Glutamate-1-semialdehyde 2,1-aminomutase from Ralstonia pickettii (strain 12J).